The primary structure comprises 398 residues: Acetate kinase (398 aa).

N7 is a Mg(2+) binding site. K14 serves as a coordination point for ATP. R91 is a substrate binding site. D148 functions as the Proton donor/acceptor in the catalytic mechanism. Residues H208–G212, D283–R285, and G331–N335 each bind ATP. E384 contacts Mg(2+).

The protein belongs to the acetokinase family. Homodimer. Requires Mg(2+) as cofactor. Mn(2+) is required as a cofactor.

The protein localises to the cytoplasm. The enzyme catalyses acetate + ATP = acetyl phosphate + ADP. It participates in metabolic intermediate biosynthesis; acetyl-CoA biosynthesis; acetyl-CoA from acetate: step 1/2. Catalyzes the formation of acetyl phosphate from acetate and ATP. Can also catalyze the reverse reaction. This chain is Acetate kinase, found in Natranaerobius thermophilus (strain ATCC BAA-1301 / DSM 18059 / JW/NM-WN-LF).